A 609-amino-acid chain; its full sequence is Protein alan shepard (609 aa).

Residues 1-12 are compositionally biased toward pro residues; the sequence is MHPRYSPAPPPL. The segment at 1-96 is disordered; it reads MHPRYSPAPP…ASVAAAPPTP (96 aa). Y5 carries the phosphotyrosine modification. Residues 13–35 show a composition bias toward low complexity; the sequence is HQQQQQQPPQQQQQQMGGPHQQQ. Residues 37–50 show a composition bias toward gly residues; that stretch reads GGVGPGTGHGGVGA. 2 stretches are compositionally biased toward low complexity: residues 51 to 68 and 83 to 92; these read AVGA…NSQQ and SSSAASVAAA. Phosphotyrosine is present on residues Y152 and Y168. The interval 190–252 is disordered; that stretch reads PATTTYGQRV…AQNQNQQGGE (63 aa). Positions 204–252 are enriched in low complexity; it reads SPSNTNSSSSSNTGSQSGTLSTSLSNTTNTNTTMGPNGTAQNQNQQGGE. RRM domains lie at 257 to 330 and 336 to 415; these read TNLY…MAKQ and TNLY…FADG. The tract at residues 583–609 is disordered; sequence MTDSEQASTAASPDEAYTQYPHQAAPK.

In terms of biological role, has a role in the perception of gravity. This chain is Protein alan shepard, found in Drosophila grimshawi (Hawaiian fruit fly).